A 663-amino-acid polypeptide reads, in one-letter code: DNA ligase 1 (663 aa).

Residues 30 to 34 (DAEYD) and 78 to 79 (SL) each bind NAD(+). Lys105 functions as the N6-AMP-lysine intermediate in the catalytic mechanism. Residues Arg126, Glu161, and Lys294 each coordinate NAD(+). Zn(2+) is bound by residues Cys389, Cys392, Cys407, and Cys412. One can recognise a BRCT domain in the interval 574-663 (AAGAPLAGKT…WAQLIEAKLV (90 aa)).

This sequence belongs to the NAD-dependent DNA ligase family. LigA subfamily. The cofactor is Mg(2+). Mn(2+) serves as cofactor.

The enzyme catalyses NAD(+) + (deoxyribonucleotide)n-3'-hydroxyl + 5'-phospho-(deoxyribonucleotide)m = (deoxyribonucleotide)n+m + AMP + beta-nicotinamide D-nucleotide.. Its function is as follows. DNA ligase that catalyzes the formation of phosphodiester linkages between 5'-phosphoryl and 3'-hydroxyl groups in double-stranded DNA using NAD as a coenzyme and as the energy source for the reaction. It is essential for DNA replication and repair of damaged DNA. The polypeptide is DNA ligase 1 (Nocardia farcinica (strain IFM 10152)).